The chain runs to 548 residues: Chaperonin GroEL (548 aa).

ATP contacts are provided by residues 30–33 (TLGP), K51, 87–91 (DGTTT), G415, and D495.

This sequence belongs to the chaperonin (HSP60) family. As to quaternary structure, forms a cylinder of 14 subunits composed of two heptameric rings stacked back-to-back. Interacts with the co-chaperonin GroES.

The protein resides in the cytoplasm. It carries out the reaction ATP + H2O + a folded polypeptide = ADP + phosphate + an unfolded polypeptide.. Functionally, together with its co-chaperonin GroES, plays an essential role in assisting protein folding. The GroEL-GroES system forms a nano-cage that allows encapsulation of the non-native substrate proteins and provides a physical environment optimized to promote and accelerate protein folding. The sequence is that of Chaperonin GroEL from Idiomarina loihiensis (strain ATCC BAA-735 / DSM 15497 / L2-TR).